The chain runs to 206 residues: Dephospho-CoA kinase (206 aa).

Positions 4-200 (IVALTGGIGS…AHYLQLASQF (197 aa)) constitute a DPCK domain. 12–17 (GSGKST) contacts ATP.

Belongs to the CoaE family.

The protein resides in the cytoplasm. It carries out the reaction 3'-dephospho-CoA + ATP = ADP + CoA + H(+). It participates in cofactor biosynthesis; coenzyme A biosynthesis; CoA from (R)-pantothenate: step 5/5. In terms of biological role, catalyzes the phosphorylation of the 3'-hydroxyl group of dephosphocoenzyme A to form coenzyme A. This is Dephospho-CoA kinase from Shigella boydii serotype 4 (strain Sb227).